We begin with the raw amino-acid sequence, 188 residues long: NAD(P)H-quinone oxidoreductase subunit J (188 aa).

Positions 1–12 are enriched in polar residues; that stretch reads MSETPSKQTAAS. The segment at 1–23 is disordered; it reads MSETPSKQTAASDETGAVVAPEP.

The protein belongs to the complex I 30 kDa subunit family. In terms of assembly, NDH-1 can be composed of about 15 different subunits; different subcomplexes with different compositions have been identified which probably have different functions.

The protein localises to the cellular thylakoid membrane. It catalyses the reaction a plastoquinone + NADH + (n+1) H(+)(in) = a plastoquinol + NAD(+) + n H(+)(out). It carries out the reaction a plastoquinone + NADPH + (n+1) H(+)(in) = a plastoquinol + NADP(+) + n H(+)(out). In terms of biological role, NDH-1 shuttles electrons from an unknown electron donor, via FMN and iron-sulfur (Fe-S) centers, to quinones in the respiratory and/or the photosynthetic chain. The immediate electron acceptor for the enzyme in this species is believed to be plastoquinone. Couples the redox reaction to proton translocation, and thus conserves the redox energy in a proton gradient. Cyanobacterial NDH-1 also plays a role in inorganic carbon-concentration. This chain is NAD(P)H-quinone oxidoreductase subunit J, found in Synechococcus sp. (strain CC9605).